Consider the following 439-residue polypeptide: Testican-1 (439 aa).

The signal sequence occupies residues 1–21 (MPAIAVLAAAAAAWCFLQVES). 5 disulfide bridges follow: Cys86-Cys97, Cys91-Cys107, Cys136-Cys166, Cys139-Cys159, and Cys148-Cys180. The Kazal-like domain maps to 130 to 182 (PSNLVKCKPCPVAQSAMVCGSDGHSYTSKCKLEFHACSTGKSLATLCDGPCPC). Residue Thr228 is glycosylated (O-linked (GalNAc...) threonine). Positions 310–376 (GLPCQNEMNR…GSRKQGAVSC (67 aa)) constitute a Thyroglobulin type-1 domain. Cystine bridges form between Cys313/Cys337, Cys348/Cys355, and Cys357/Cys376. 2 O-linked (Xyl...) (glycosaminoglycan) serine glycosylation sites follow: Ser383 and Ser388. A disordered region spans residues 415-439 (VHTRAVTEDDEDEDDDKEDEVGYIW). The span at 422-439 (EDDEDEDDDKEDEVGYIW) shows a compositional bias: acidic residues.

Post-translationally, O-glycosylated. Glycosaminoglycan that contains chondroitin sulfate and heparan sulfate.

The protein resides in the secreted. It localises to the extracellular space. Its subcellular location is the extracellular matrix. Its function is as follows. May play a role in cell-cell and cell-matrix interactions. May contribute to various neuronal mechanisms in the central nervous system. This is Testican-1 (SPOCK1) from Homo sapiens (Human).